A 510-amino-acid chain; its full sequence is ATP synthase subunit alpha (510 aa).

169-176 is a binding site for ATP; it reads GDRQTGKT.

The protein belongs to the ATPase alpha/beta chains family. As to quaternary structure, F-type ATPases have 2 components, CF(1) - the catalytic core - and CF(0) - the membrane proton channel. CF(1) has five subunits: alpha(3), beta(3), gamma(1), delta(1), epsilon(1). CF(0) has four main subunits: a(1), b(1), b'(1) and c(9-12).

The protein localises to the cell inner membrane. It catalyses the reaction ATP + H2O + 4 H(+)(in) = ADP + phosphate + 5 H(+)(out). In terms of biological role, produces ATP from ADP in the presence of a proton gradient across the membrane. The alpha chain is a regulatory subunit. The sequence is that of ATP synthase subunit alpha from Rhodopseudomonas palustris (strain HaA2).